Consider the following 496-residue polypeptide: Glutamyl-tRNA(Gln) amidotransferase subunit A (496 aa).

Active-site charge relay system residues include Lys-75 and Ser-150. Ser-174 (acyl-ester intermediate) is an active-site residue.

It belongs to the amidase family. GatA subfamily. Heterotrimer of A, B and C subunits.

It catalyses the reaction L-glutamyl-tRNA(Gln) + L-glutamine + ATP + H2O = L-glutaminyl-tRNA(Gln) + L-glutamate + ADP + phosphate + H(+). Allows the formation of correctly charged Gln-tRNA(Gln) through the transamidation of misacylated Glu-tRNA(Gln) in organisms which lack glutaminyl-tRNA synthetase. The reaction takes place in the presence of glutamine and ATP through an activated gamma-phospho-Glu-tRNA(Gln). The sequence is that of Glutamyl-tRNA(Gln) amidotransferase subunit A from Burkholderia cenocepacia (strain HI2424).